Here is a 78-residue protein sequence, read N- to C-terminus: MFTTKKSMLLLFFLGTISLSLCEEERGADEEEGDGEKLMKRGLFSILKGVGKIALKGLAKNMGKMGLDLVSCKISKEC.

Residues 1 to 22 form the signal peptide; that stretch reads MFTTKKSMLLLFFLGTISLSLC. Residues 23 to 39 constitute a propeptide that is removed on maturation; the sequence is EEERGADEEEGDGEKLM. Cys72 and Cys78 are joined by a disulfide.

Expressed by the skin glands.

It is found in the secreted. Its function is as follows. Antimicrobial activity against the Gram-negative bacterium E.coli, the Gram-positive bacterium S.aureus and the yeast C.albicans. In Lithobates palustris (Pickerel frog), this protein is Esculentin-2PLa.